The following is a 236-amino-acid chain: NADH-quinone oxidoreductase subunit C (236 aa).

Positions 1 to 20 (MSPPNQDAQEGRPDSPTAEV) are disordered.

This sequence belongs to the complex I 30 kDa subunit family. As to quaternary structure, NDH-1 is composed of 14 different subunits. Subunits NuoB, C, D, E, F, and G constitute the peripheral sector of the complex.

Its subcellular location is the cell membrane. It catalyses the reaction a quinone + NADH + 5 H(+)(in) = a quinol + NAD(+) + 4 H(+)(out). Its function is as follows. NDH-1 shuttles electrons from NADH, via FMN and iron-sulfur (Fe-S) centers, to quinones in the respiratory chain. The immediate electron acceptor for the enzyme in this species is believed to be a menaquinone. Couples the redox reaction to proton translocation (for every two electrons transferred, four hydrogen ions are translocated across the cytoplasmic membrane), and thus conserves the redox energy in a proton gradient. In Mycobacterium tuberculosis (strain ATCC 25177 / H37Ra), this protein is NADH-quinone oxidoreductase subunit C.